Here is a 127-residue protein sequence, read N- to C-terminus: Glycine cleavage system H protein (127 aa).

The region spanning Lys22–Glu104 is the Lipoyl-binding domain. Lys63 is modified (N6-lipoyllysine).

Belongs to the GcvH family. The glycine cleavage system is composed of four proteins: P, T, L and H. It depends on (R)-lipoate as a cofactor.

Functionally, the glycine cleavage system catalyzes the degradation of glycine. The H protein shuttles the methylamine group of glycine from the P protein to the T protein. In terms of biological role, is also involved in protein lipoylation via its role as an octanoyl/lipoyl carrier protein intermediate. This Geobacillus sp. (strain WCH70) protein is Glycine cleavage system H protein.